Consider the following 186-residue polypeptide: ATP-dependent protease subunit HslV (186 aa).

T14 is an active-site residue. Na(+) is bound by residues A168, C171, and T174.

Belongs to the peptidase T1B family. HslV subfamily. In terms of assembly, a double ring-shaped homohexamer of HslV is capped on each side by a ring-shaped HslU homohexamer. The assembly of the HslU/HslV complex is dependent on binding of ATP.

The protein resides in the cytoplasm. The catalysed reaction is ATP-dependent cleavage of peptide bonds with broad specificity.. With respect to regulation, allosterically activated by HslU binding. Its function is as follows. Protease subunit of a proteasome-like degradation complex believed to be a general protein degrading machinery. The polypeptide is ATP-dependent protease subunit HslV (Bradyrhizobium sp. (strain ORS 278)).